The chain runs to 343 residues: DNA-directed RNA polymerase subunit alpha (343 aa).

Residues 1 to 236 form an alpha N-terminal domain (alpha-NTD) region; sequence MQEHYYKFWR…EQLQIFLTFD (236 aa). The interval 253–343 is alpha C-terminal domain (alpha-CTD); it reads LNENLFRSVD…QPPQKRETQQ (91 aa).

It belongs to the RNA polymerase alpha chain family. Homodimer. The RNAP catalytic core consists of 2 alpha, 1 beta, 1 beta' and 1 omega subunit. When a sigma factor is associated with the core the holoenzyme is formed, which can initiate transcription.

The enzyme catalyses RNA(n) + a ribonucleoside 5'-triphosphate = RNA(n+1) + diphosphate. Functionally, DNA-dependent RNA polymerase catalyzes the transcription of DNA into RNA using the four ribonucleoside triphosphates as substrates. This chain is DNA-directed RNA polymerase subunit alpha, found in Bdellovibrio bacteriovorus (strain ATCC 15356 / DSM 50701 / NCIMB 9529 / HD100).